Consider the following 88-residue polypeptide: Small ribosomal subunit protein uS15 (88 aa).

Belongs to the universal ribosomal protein uS15 family. In terms of assembly, part of the 30S ribosomal subunit. Forms a bridge to the 50S subunit in the 70S ribosome, contacting the 23S rRNA.

In terms of biological role, one of the primary rRNA binding proteins, it binds directly to 16S rRNA where it helps nucleate assembly of the platform of the 30S subunit by binding and bridging several RNA helices of the 16S rRNA. Functionally, forms an intersubunit bridge (bridge B4) with the 23S rRNA of the 50S subunit in the ribosome. The polypeptide is Small ribosomal subunit protein uS15 (Borrelia turicatae (strain 91E135)).